The primary structure comprises 296 residues: Nicotinate dehydrogenase FAD-subunit (296 aa).

Residues 1-179 (MKDFEFFAPK…TEVIIDRPDA (179 aa)) enclose the FAD-binding PCMH-type domain. FAD-binding positions include 29–36 (IIAGGTDL), glycine 101, 110–114 (TIGGN), aspartate 123, arginine 160, methionine 169, and lysine 187.

In terms of assembly, heterooctamer of NDHM, NDHL, NDHS and NDHF. Dimer of heterotetramers. The cofactor is FAD.

It catalyses the reaction nicotinate + NADP(+) + H2O = 6-hydroxynicotinate + NADPH + H(+). It participates in cofactor degradation; nicotinate degradation; 6-hydroxynicotinate from nicotinate: step 1/1. Its activity is regulated as follows. Reversibly inactivated by selenide and sulfide. Not inhibited by cyanide. Catalyzes the hydroxylation of nicotinate to 6-hydroxynicotinate. Also active against 2-pyrazinecarboxylic acid, but inactive against other nicotinate analogs. The chain is Nicotinate dehydrogenase FAD-subunit (ndhF) from Eubacterium barkeri (Clostridium barkeri).